The primary structure comprises 157 residues: Small ribosomal subunit protein uS7 (157 aa).

It belongs to the universal ribosomal protein uS7 family. As to quaternary structure, part of the 30S ribosomal subunit. Contacts proteins S9 and S11.

Functionally, one of the primary rRNA binding proteins, it binds directly to 16S rRNA where it nucleates assembly of the head domain of the 30S subunit. Is located at the subunit interface close to the decoding center, probably blocks exit of the E-site tRNA. In Chlamydia muridarum (strain MoPn / Nigg), this protein is Small ribosomal subunit protein uS7.